The primary structure comprises 1398 residues: DNA topoisomerase 2 (1398 aa).

ATP contacts are provided by residues Asn-69, Asn-103, 131–133, and 144–151; these read SDN and GRNGFGAK. Residues 260–317 form a disordered region; the sequence is NSNDNKNNKGQNDNNNNNNNNNDENANQNNDNLDVSLSNEPADGTPTKNNNNNNNNND. Residues 267–291 are compositionally biased toward low complexity; that stretch reads NKGQNDNNNNNNNNNDENANQNNDN. 411 to 413 lines the ATP pocket; sequence QTK. The 116-residue stretch at 493–608 folds into the Toprim domain; that stretch reads CTLILTEGDS…SLLKHKGFLS (116 aa). Glu-499, Asp-577, and Asp-579 together coordinate Mg(2+). Residues 739-1191 form the Topo IIA-type catalytic domain; it reads IPNIMDGWKP…TVETMWLKDI (453 aa). Tyr-830 serves as the catalytic O-(5'-phospho-DNA)-tyrosine intermediate. The tract at residues 1012 to 1021 is interaction with DNA; that stretch reads KLKSTLTTTN. Disordered regions lie at residues 1214 to 1250 and 1262 to 1361; these read KFKV…SDSS and NTNK…NSSI. Positions 1262–1276 are enriched in low complexity; sequence NTNKKTTTSSNNVNN. Polar residues-rich tracts occupy residues 1287–1300 and 1348–1357; these read LNSN…SVSK and DSTNDNNSEL.

This sequence belongs to the type II topoisomerase family. In terms of assembly, homodimer. It depends on Mg(2+) as a cofactor. Requires Mn(2+) as cofactor. Ca(2+) is required as a cofactor.

It is found in the nucleus. It carries out the reaction ATP-dependent breakage, passage and rejoining of double-stranded DNA.. Functionally, control of topological states of DNA by transient breakage and subsequent rejoining of DNA strands. Topoisomerase II makes double-strand breaks. This chain is DNA topoisomerase 2 (TOP2), found in Plasmodium falciparum (isolate K1 / Thailand).